The primary structure comprises 110 residues: UPF0122 protein SERP0802 (110 aa).

This sequence belongs to the UPF0122 family.

Might take part in the signal recognition particle (SRP) pathway. This is inferred from the conservation of its genetic proximity to ftsY/ffh. May be a regulatory protein. The protein is UPF0122 protein SERP0802 of Staphylococcus epidermidis (strain ATCC 35984 / DSM 28319 / BCRC 17069 / CCUG 31568 / BM 3577 / RP62A).